Here is a 401-residue protein sequence, read N- to C-terminus: S-adenosylmethionine synthase (401 aa).

137–142 (GEGSGD) is an ATP binding site. Residues 272–305 (GTSAEQGDDGSVGRGNRSNGLITPNRSMSMEATS) are disordered. The segment covering 287-305 (NRSNGLITPNRSMSMEATS) has biased composition (polar residues).

This sequence belongs to the AdoMet synthase 2 family. It depends on Mg(2+) as a cofactor.

It catalyses the reaction L-methionine + ATP + H2O = S-adenosyl-L-methionine + phosphate + diphosphate. It participates in amino-acid biosynthesis; S-adenosyl-L-methionine biosynthesis; S-adenosyl-L-methionine from L-methionine: step 1/1. In terms of biological role, catalyzes the formation of S-adenosylmethionine from methionine and ATP. The chain is S-adenosylmethionine synthase from Natronomonas pharaonis (strain ATCC 35678 / DSM 2160 / CIP 103997 / JCM 8858 / NBRC 14720 / NCIMB 2260 / Gabara) (Halobacterium pharaonis).